A 725-amino-acid chain; its full sequence is Ribosomal RNA large subunit methyltransferase K/L (725 aa).

In terms of domain architecture, THUMP spans 46–157; sequence VAYRLCLWSR…RGQATLSLDL (112 aa). Residues 393 to 412 form a disordered region; that stretch reads TGERGERNDDGQARAPSEPA. Residues 395 to 404 show a composition bias toward basic and acidic residues; that stretch reads ERGERNDDGQ.

The protein belongs to the methyltransferase superfamily. RlmKL family.

The protein resides in the cytoplasm. It catalyses the reaction guanosine(2445) in 23S rRNA + S-adenosyl-L-methionine = N(2)-methylguanosine(2445) in 23S rRNA + S-adenosyl-L-homocysteine + H(+). The catalysed reaction is guanosine(2069) in 23S rRNA + S-adenosyl-L-methionine = N(2)-methylguanosine(2069) in 23S rRNA + S-adenosyl-L-homocysteine + H(+). Its function is as follows. Specifically methylates the guanine in position 2445 (m2G2445) and the guanine in position 2069 (m7G2069) of 23S rRNA. This is Ribosomal RNA large subunit methyltransferase K/L from Pseudomonas paraeruginosa (strain DSM 24068 / PA7) (Pseudomonas aeruginosa (strain PA7)).